The primary structure comprises 1347 residues: Protein HUA2-LIKE 3 (1347 aa).

The 58-residue stretch at 24 to 81 (VGDLVLAKVKGFPAWPAVVDEPEKWGHSADSKKVTVHFFGTQQIAFCNHGDVESFTEE) folds into the PWWP domain. Disordered regions lie at residues 110–137 (KLKQQDQASGPKYAEETTAGSSGNTSQL), 251–320 (DGGP…SGSK), and 383–402 (DSCQRSQNSHERLNERPCEE). Residues 127–137 (TAGSSGNTSQL) show a composition bias toward polar residues. Low complexity predominate over residues 302 to 314 (VESNNNSRNEGNG). A compositionally biased stretch (basic and acidic residues) spans 390–402 (NSHERLNERPCEE). A CID domain is found at 845 to 986 (DVQCTVESFE…HHIRELDSLS (142 aa)). Disordered stretches follow at residues 1037 to 1069 (RDEDEGSDSDGGDFESVTPEHESRSLEEHVTPS), 1121 to 1140 (TSHQNVTSSSPPARPSQNAQ), 1147 to 1223 (YSNG…YSYM), and 1259 to 1347 (RMRP…WHQR). A compositionally biased stretch (acidic residues) spans 1038-1049 (DEDEGSDSDGGD). Positions 1054-1069 (TPEHESRSLEEHVTPS) are enriched in basic and acidic residues. The span at 1181–1191 (PSYSSRVSLSK) shows a compositional bias: polar residues. The span at 1208–1217 (SSHPPPPPPS) shows a compositional bias: pro residues. The span at 1259 to 1272 (RMRPEPCENRDNWR) shows a compositional bias: basic and acidic residues.

Expressed throughout young primordia, and vegetative and reproductive apices.

The protein resides in the nucleus. Functionally, probable transcription factor that acts with partial redundancy with HULK1 and HULK2. Plays diverse and essential roles in the control of plant development, physiology and flowering time. The protein is Protein HUA2-LIKE 3 of Arabidopsis thaliana (Mouse-ear cress).